Reading from the N-terminus, the 426-residue chain is Endoglucanase (426 aa).

An N-terminal signal peptide occupies residues 1 to 19 (MRRCMPLVAASVAALMLAG). Cys20 carries the N-palmitoyl cysteine lipid modification. Residue Cys20 is the site of S-diacylglycerol cysteine attachment. Positions 20–45 (CGGGDGDPSLSTASVSATDTTTLKPA) are excised as a propeptide. Residue Glu249 is the Proton donor of the active site. Glu361 serves as the catalytic Nucleophile.

This sequence belongs to the glycosyl hydrolase 5 (cellulase A) family.

Its subcellular location is the cell membrane. It carries out the reaction Endohydrolysis of (1-&gt;4)-beta-D-glucosidic linkages in cellulose, lichenin and cereal beta-D-glucans.. In Ralstonia solanacearum (Pseudomonas solanacearum), this protein is Endoglucanase (egl).